Consider the following 263-residue polypeptide: Chromosomal replication initiator protein DnaA (263 aa).

Residue Glu-1 is a region of interest, domain I, interacts with DnaA modulators. A region of interest (domain II) is located at residue Glu-1. Positions 1–179 (ESGMGKTHLL…GSVSRLNFWS (179 aa)) are domain III, AAA+ region. 4 residues coordinate ATP: Gly-3, Gly-5, Lys-6, and Thr-7. The tract at residues 180 to 263 (QQNPEEKIIT…HTLAQIGEEF (84 aa)) is domain IV, binds dsDNA.

The protein belongs to the DnaA family. In terms of assembly, oligomerizes as a right-handed, spiral filament on DNA at oriC.

It localises to the cytoplasm. Plays an essential role in the initiation and regulation of chromosomal replication. ATP-DnaA binds to the origin of replication (oriC) to initiate formation of the DNA replication initiation complex once per cell cycle. Binds the DnaA box (a 9 base pair repeat at the origin) and separates the double-stranded (ds)DNA. Forms a right-handed helical filament on oriC DNA; dsDNA binds to the exterior of the filament while single-stranded (ss)DNA is stabiized in the filament's interior. The ATP-DnaA-oriC complex binds and stabilizes one strand of the AT-rich DNA unwinding element (DUE), permitting loading of DNA polymerase. After initiation quickly degrades to an ADP-DnaA complex that is not apt for DNA replication. Binds acidic phospholipids. This chain is Chromosomal replication initiator protein DnaA, found in Mycoplasma mycoides.